A 495-amino-acid polypeptide reads, in one-letter code: Trimethylamine methyltransferase MttB2 (495 aa).

A non-standard amino acid (pyrrolysine) is located at residue O334.

The protein belongs to the trimethylamine methyltransferase family. As to quaternary structure, can form a complex with MttC.

The catalysed reaction is Co(I)-[trimethylamine-specific corrinoid protein] + trimethylamine + H(+) = methyl-Co(III)-[trimethylamine-specific corrinoid protein] + dimethylamine. It participates in one-carbon metabolism; methanogenesis from trimethylamine. Catalyzes the transfer of a methyl group from trimethylamine to the corrinoid cofactor of MttC. This chain is Trimethylamine methyltransferase MttB2 (mttB2), found in Methanosarcina mazei (strain ATCC BAA-159 / DSM 3647 / Goe1 / Go1 / JCM 11833 / OCM 88) (Methanosarcina frisia).